Reading from the N-terminus, the 181-residue chain is Adenylate kinase (181 aa).

G10 to T15 serves as a coordination point for ATP. The interval S30–V59 is NMP. AMP contacts are provided by residues T31, R36, E57–V59, G85–R88, and Q92. Residues A126–D132 are LID. R127 is a binding site for ATP. R129 and R140 together coordinate AMP. G166 provides a ligand contact to ATP.

Belongs to the adenylate kinase family. As to quaternary structure, monomer.

The protein localises to the cytoplasm. It carries out the reaction AMP + ATP = 2 ADP. It participates in purine metabolism; AMP biosynthesis via salvage pathway; AMP from ADP: step 1/1. Functionally, catalyzes the reversible transfer of the terminal phosphate group between ATP and AMP. Plays an important role in cellular energy homeostasis and in adenine nucleotide metabolism. In Rhodococcus erythropolis (strain PR4 / NBRC 100887), this protein is Adenylate kinase.